We begin with the raw amino-acid sequence, 883 residues long: Alanine--tRNA ligase (883 aa).

Zn(2+) contacts are provided by H563, H567, C677, and H681.

The protein belongs to the class-II aminoacyl-tRNA synthetase family. Requires Zn(2+) as cofactor.

The protein localises to the cytoplasm. The catalysed reaction is tRNA(Ala) + L-alanine + ATP = L-alanyl-tRNA(Ala) + AMP + diphosphate. Catalyzes the attachment of alanine to tRNA(Ala) in a two-step reaction: alanine is first activated by ATP to form Ala-AMP and then transferred to the acceptor end of tRNA(Ala). Also edits incorrectly charged Ser-tRNA(Ala) and Gly-tRNA(Ala) via its editing domain. The protein is Alanine--tRNA ligase of Cereibacter sphaeroides (strain ATCC 17023 / DSM 158 / JCM 6121 / CCUG 31486 / LMG 2827 / NBRC 12203 / NCIMB 8253 / ATH 2.4.1.) (Rhodobacter sphaeroides).